Consider the following 516-residue polypeptide: Lipid II flippase MurJ (516 aa).

11 helical membrane-spanning segments follow: residues 93 to 113 (WALA…VFAV), 133 to 153 (IMFP…VLNT), 159 to 179 (LPAF…VFVA), 188 to 208 (ALAW…LPGL), 233 to 253 (VLAK…SLII), 275 to 295 (LMEF…LPSL), 317 to 337 (VTFL…TPLT), 358 to 378 (LATY…APGF), 390 to 409 (IAIG…VPLI), 448 to 468 (FFVQ…WCAI), and 483 to 503 (IALM…MLWV).

The protein belongs to the MurJ/MviN family.

Its subcellular location is the cell inner membrane. The protein operates within cell wall biogenesis; peptidoglycan biosynthesis. Involved in peptidoglycan biosynthesis. Transports lipid-linked peptidoglycan precursors from the inner to the outer leaflet of the cytoplasmic membrane. The protein is Lipid II flippase MurJ of Burkholderia cenocepacia (strain ATCC BAA-245 / DSM 16553 / LMG 16656 / NCTC 13227 / J2315 / CF5610) (Burkholderia cepacia (strain J2315)).